The sequence spans 216 residues: Probable nicotinate-nucleotide adenylyltransferase (216 aa).

This sequence belongs to the NadD family.

It carries out the reaction nicotinate beta-D-ribonucleotide + ATP + H(+) = deamido-NAD(+) + diphosphate. It participates in cofactor biosynthesis; NAD(+) biosynthesis; deamido-NAD(+) from nicotinate D-ribonucleotide: step 1/1. Functionally, catalyzes the reversible adenylation of nicotinate mononucleotide (NaMN) to nicotinic acid adenine dinucleotide (NaAD). The polypeptide is Probable nicotinate-nucleotide adenylyltransferase (Pelobacter propionicus (strain DSM 2379 / NBRC 103807 / OttBd1)).